Reading from the N-terminus, the 115-residue chain is MNRSLLAFAIVLVLLVAGTSSQLFNKSGNCPMRNTVTSCTPRCIGDGECSSNQKCCPNKCGTTSCANSSPLNTGSDGGYKGSSNQQAVYCNGVKCAAYEKCQYDRNTRRDKCTRV.

Residues 1 to 21 form the signal peptide; sequence MNRSLLAFAIVLVLLVAGTSS. Residues 23-69 form the WAP domain; sequence LFNKSGNCPMRNTVTSCTPRCIGDGECSSNQKCCPNKCGTTSCANSS. 4 disulfide bridges follow: Cys-30–Cys-56, Cys-39–Cys-60, Cys-43–Cys-55, and Cys-49–Cys-65.

This sequence belongs to the venom waprin family. Cys-rich waprin subfamily. Expressed by the venom gland.

It localises to the secreted. Functionally, antimicrobial peptides with activity against Gram-positive and Gram-negative bacteria as well as fungi. Recognizes carbohydrates in the microbial cell walls, and induces structural damage to them. Also inhibits microbial serine proteases, as well as mammalian elastases. Carbohydrates that are recognized are LPS, mannan, peptidoglycan, and N-acetl-D-glucosamine. This is Waprin-like protein from Tetramorium bicarinatum (Tramp ant).